The primary structure comprises 230 residues: Lactate utilization protein C (230 aa).

This sequence belongs to the LutC/YkgG family.

Is involved in L-lactate degradation and allows cells to grow with lactate as the sole carbon source. The sequence is that of Lactate utilization protein C from Halalkalibacterium halodurans (strain ATCC BAA-125 / DSM 18197 / FERM 7344 / JCM 9153 / C-125) (Bacillus halodurans).